We begin with the raw amino-acid sequence, 128 residues long: MEIGKKYELNPHRIKSFIDISSSNANMVGIIQENGGWFEVKSILSLDGFDYVTEIICANGEIYNDDGMGDDYFELSEEEFYCFREYKEPTSEEDKVEDKVSDVTKIHCIVDENNVDEIIELLRKTFKA.

This is an uncharacterized protein from Enterobacteria phage LZ3 (Bacteriophage LZ3).